Consider the following 361-residue polypeptide: Chorismate synthase (361 aa).

Positions 48 and 54 each coordinate NADP(+). Residues 125 to 127 (RSS), 238 to 239 (NA), Gly278, 293 to 297 (KPTSS), and Arg319 each bind FMN.

Belongs to the chorismate synthase family. In terms of assembly, homotetramer. It depends on FMNH2 as a cofactor.

It catalyses the reaction 5-O-(1-carboxyvinyl)-3-phosphoshikimate = chorismate + phosphate. Its pathway is metabolic intermediate biosynthesis; chorismate biosynthesis; chorismate from D-erythrose 4-phosphate and phosphoenolpyruvate: step 7/7. Functionally, catalyzes the anti-1,4-elimination of the C-3 phosphate and the C-6 proR hydrogen from 5-enolpyruvylshikimate-3-phosphate (EPSP) to yield chorismate, which is the branch point compound that serves as the starting substrate for the three terminal pathways of aromatic amino acid biosynthesis. This reaction introduces a second double bond into the aromatic ring system. The polypeptide is Chorismate synthase (Cronobacter sakazakii (strain ATCC BAA-894) (Enterobacter sakazakii)).